The following is a 483-amino-acid chain: E3 ubiquitin-protein ligase TRIM50 (483 aa).

The segment at 16-57 (CPICLEVFKEPLMLQCGHSYCKDCLDNLSQHLDSELCCPVCR) adopts an RING-type zinc-finger fold. The B box-type zinc finger occupies 84 to 125 (IEPTVCVHHRNPLSLFCEKDQEFICGLCGLLGSHQHHRVTPV). Positions 89, 92, 111, and 117 each coordinate Zn(2+). Coiled-coil stretches lie at residues 127 to 169 (TVYS…NESD) and 203 to 236 (GLVA…GNES). Residues 275 to 474 (DIKLTVWKRL…LPMVLPPPSG (200 aa)) enclose the B30.2/SPRY domain. The residue at position 372 (Lys372) is an N6-acetyllysine.

It belongs to the TRIM/RBCC family. Can form dimers and trimers. Interacts with several E2 ubiquitin-conjugating enzymes, including UBE2L6, UBE2E1, UBE2E3. No interaction with UBE2H. Interacts with BECN1. Interacts with SQSTM1. Interacts with NLRP3. In terms of processing, auto-ubiquitinated. Post-translationally, acetylated by EP300 and KAT2B. HDAC6 drives TRIM50 deacetylation. Acetylation antagonizes with TRIM50 ubiquitination. In terms of tissue distribution, expressed in the stomach.

The protein resides in the cytoplasm. It carries out the reaction S-ubiquitinyl-[E2 ubiquitin-conjugating enzyme]-L-cysteine + [acceptor protein]-L-lysine = [E2 ubiquitin-conjugating enzyme]-L-cysteine + N(6)-ubiquitinyl-[acceptor protein]-L-lysine.. In terms of biological role, E3 ubiquitin-protein ligase that ubiquitinates Beclin-1/BECN1 in a 'Lys-63'-dependent manner enhancing its binding to ULK1. In turn, promotes starvation-induced autophagy activation. Also interacts with p62/SQSTM1 protein and thereby induces the formation and the autophagy clearance of aggresome-associated polyubiquitinated proteins through HDAC6 interaction. Also promotes NLRP3 inflammasome activation by directly inducing NLRP3 oligomerization independent of its E3 ligase function. The sequence is that of E3 ubiquitin-protein ligase TRIM50 (Trim50) from Mus musculus (Mouse).